A 384-amino-acid polypeptide reads, in one-letter code: SAGA complex subunit Spt3 (384 aa).

It belongs to the SPT3 family. In terms of assembly, component of the Spt-Ada-Gcn5 acetyltransferase (SAGA) complex consisting of wda/Taf5L, Saf6, Taf9, Taf10b, Taf12, Ada1, Spt3, Spt7, Spt20, Sf3b3, Sf3b5, Nipped-A/Tra1, a histone acetyltransferase (HAT) module made up of Gcn5, Ada2b (Isoform B), Ada3 and Sgf29, and a deubiquitinase (DUB) module made up of not/nonstop, Sgf11 and e(y)2 tethered to SAGA by Atxn7. Taf5 and Taf10, which has partially redundant properties with Taf10b, may also be part of this complex.

It is found in the nucleus. The protein resides in the chromosome. Functionally, component of the transcription regulatory complex SAGA, a multiprotein complex that activates transcription by remodeling chromatin and mediating histone acetylation and deubiquitination. The SAGA complex predominantly acetylates histone H3. Required for oogenesis; involved in transcriptional activation. The sequence is that of SAGA complex subunit Spt3 from Drosophila melanogaster (Fruit fly).